Consider the following 149-residue polypeptide: Large ribosomal subunit protein bL9 (149 aa).

This sequence belongs to the bacterial ribosomal protein bL9 family.

Binds to the 23S rRNA. This chain is Large ribosomal subunit protein bL9, found in Laribacter hongkongensis (strain HLHK9).